The following is a 136-amino-acid chain: Large ribosomal subunit protein eL27 (136 aa).

Positions 5–40 (MKPGKVVMVLAGRYAGRKAVIVKNIDDGTADRPYSH) constitute a KOW domain.

The protein belongs to the eukaryotic ribosomal protein eL27 family. In terms of assembly, component of the large ribosomal subunit.

It localises to the cytoplasm. Its subcellular location is the cytosol. It is found in the rough endoplasmic reticulum. Its function is as follows. Component of the large ribosomal subunit. This is Large ribosomal subunit protein eL27 (rpl27) from Hippocampus comes (Tiger tail seahorse).